Here is a 240-residue protein sequence, read N- to C-terminus: 1-(5-phosphoribosyl)-5-[(5-phosphoribosylamino)methylideneamino] imidazole-4-carboxamide isomerase (240 aa).

Residue Asp-10 is the Proton acceptor of the active site. Asp-132 acts as the Proton donor in catalysis.

It belongs to the HisA/HisF family.

Its subcellular location is the cytoplasm. It catalyses the reaction 1-(5-phospho-beta-D-ribosyl)-5-[(5-phospho-beta-D-ribosylamino)methylideneamino]imidazole-4-carboxamide = 5-[(5-phospho-1-deoxy-D-ribulos-1-ylimino)methylamino]-1-(5-phospho-beta-D-ribosyl)imidazole-4-carboxamide. The protein operates within amino-acid biosynthesis; L-histidine biosynthesis; L-histidine from 5-phospho-alpha-D-ribose 1-diphosphate: step 4/9. In Methanocella arvoryzae (strain DSM 22066 / NBRC 105507 / MRE50), this protein is 1-(5-phosphoribosyl)-5-[(5-phosphoribosylamino)methylideneamino] imidazole-4-carboxamide isomerase.